A 94-amino-acid chain; its full sequence is Integration host factor subunit beta (94 aa).

The protein belongs to the bacterial histone-like protein family. Heterodimer of an alpha and a beta chain.

Its function is as follows. This protein is one of the two subunits of integration host factor, a specific DNA-binding protein that functions in genetic recombination as well as in transcriptional and translational control. This chain is Integration host factor subunit beta, found in Xanthobacter autotrophicus (strain ATCC BAA-1158 / Py2).